The chain runs to 290 residues: MSLFEAQPRPTKIYHSETYDRIAKHHGFNGQGKVVLITGGASGVGFSIAKAFAAAGVVCIAIVSRSASPQEQAKAALEAAYPSVRVVLFQASVTDSVRMPEILHELGPVDVLVLGVAVVHRREKATAITEQELRDAFDTNVIAAFNLTKAYLETPLPASGQKTIINISSAAAQVHTTRRVGYGSSKAAAAQVLQHFAVEQEQEPDGNPVRIFSFHPGAFYTPAVAQHFTKDEHKWDDLALPGDFAVWLAGPESSFLHGRHLWANWDVDELIGLRERVLQDRRFLTIGLVV.

Residues Ile-37 and Lys-149 each contribute to the NADP(+) site. Residues Ser-168 and Tyr-182 each act as proton donor in the active site. 3 residues coordinate NADP(+): Tyr-182, Lys-186, and Thr-221. The Lowers pKa of active site Tyr role is filled by Lys-186.

It belongs to the short-chain dehydrogenases/reductases (SDR) family.

Its pathway is secondary metabolite biosynthesis. Its function is as follows. Short chain dehydrogenase/reductase; part of the gene cluster that mediates the biosynthesis of the tetrahydroxanthone dimer neosartorin, which exhibits antibacterial activity. The two different monomeric units appear to be synthesized by the same set of enzymes, among which the Baeyer-Villiger monooxygenase nsrF is the key enzyme for the divergence of the biosynthetic routes. The pathway begins with the synthesis of atrochrysone thioester by the polyketide synthase nsrB. The atrochrysone carboxyl ACP thioesterase nsrC then breaks the thioester bond and releases the atrochrysone carboxylic acid from AacuL. Atrochrysone carboxylic acid is decarboxylated by the decarboxylase nsrE, and oxidized by the anthrone oxygenase nsrD to yield emodin. Emodin is then reduced to emodin hydroquinone by the oxidoreductase nsrR. A-ring reduction by the short chain dehydrogenase nsrJ, dehydration by the scytalone dehydratase-like protein nsrI and probable spontaneous re-oxidation, results in overall deoxygenation to chrysophanol. The Baeyer-Villiger monooxygenase nsrF accepts chrysophanol as a substrate to insert one oxygen atom at two different positions to yield the precursors of both monomric units. NsrF is promiscuous/flexible in interacting with the 2 (non methylated and methylated) aromatic rings of chrysophanol, thus diverging the biosynthetic pathway at this point. After the hydrolysis of the lactones, methylesterification by the methyltransferase nsrG yields respectively moniliphenone and 2,2',6'-trihydroxy-4-methyl-6-methoxya-cyldiphenylmethanone. The next steps are the hydroxylation by the FAD-dependent monooxygenase nsrK, followed by isomerization by the monooxygenase nsrQ. The short chain dehydrogenase/reductase nsrO then catalyzes the C-5 ketoreduction to give the xanthone skeleton of blennolide C and 5-acetylblennolide A. The acetyltransferase nsrL has a strict substrate specificity and uses only blennolide A but not blennolide C to yield 5-acetylblennolide A as the single-acetylated product. In the final step of the biosynthesis, the heterodimerization of the 2 xanthones, blennolide C and 5-acetylblennolide A, is catalyzed by the cytochrome P450 monooxygenase nsrP. NsrP can utilize at least three different xanthones as its substrates to perform the dimerization reaction. The polypeptide is Short chain dehydrogenase/reductase nsrO (Aspergillus novofumigatus (strain IBT 16806)).